Reading from the N-terminus, the 899-residue chain is MVSLGGIARKIFGSSNERRIRGNKPRVAAINALEDSIKALSDAELAAKTEEFKGELAKGKTLDDILIPAFAVAREASRRALGMRPFDVQLIGGMILHENAIAEMKTGEGKTLVATLAVYLNALSGKGVHVVTVNDYLASRDAAIMAKLYSFLGLTTGVIVHGMNDDERREAYACDITYATNNELGFDYLRDNMKYERGQMVQRGHNYAIVDEVDSILVDEARTPLIISGPLDDRSDLYTTIDAFIPMLSAEDYEIDEKQKSANFSEVGTEKLENLLKDAGLLKGVSLYDVENVAIVHHINNALKAHKLFQRDKDYIVRNDEIVIIDEFTGRMMPGRRYSEGQHQALEAKEKVTIQPENQTLASITFQNYFRMYSKLAGMTGTANTEAEEFQDIYGLSVIEVPTNLPILRIDEDDEVYRTFEEKFKAIIEEIKASASRNQPVLVGTTSIEKSELLATMLRQSGFTDFSVLNARYHEQEAYIVSQAGVPGAVTIATNMAGRGTDIQLGGNIDMRLERDLEGMEPGPERDAKEQAIREEVKALKEKALAAGGLYVIATERHESRRIDNQLRGRSGRQGDPGRSKFYLSLQDDLMRIFGSDRMDSMLQKLGLKEGEAIVHPWINKALERAQKKVEARNFDIRKNLLKYDDVLNDQRKVIFEQRVELMDAEDLTETIDDMRHELIDTIVRTHIPEKAYAEQWDVAGLKTAMTGILNLDLPIEDWAQEEGIAEDDIVERVKKAADEVMAEKTERFGPEIMAYIERSVLLQTIDNLWREHIVNLDHLRSVVGFRGYAQRDPLQEYKAEAFELFQALLANMREGVTAQMMRVEIVREAPPEPTLPIMHGHHEDPQTGQDEFAAADGIVAPENRNPADPSTWGKVGRNEMCPCGSGKRFKHCHGALLA.

ATP-binding positions include Q89, 107-111 (GEGKT), and D502. The Zn(2+) site is built by C882, C884, C893, and H894.

Belongs to the SecA family. As to quaternary structure, monomer and homodimer. Part of the essential Sec protein translocation apparatus which comprises SecA, SecYEG and auxiliary proteins SecDF-YajC and YidC. Requires Zn(2+) as cofactor.

The protein localises to the cell inner membrane. It is found in the cytoplasm. It catalyses the reaction ATP + H2O + cellular proteinSide 1 = ADP + phosphate + cellular proteinSide 2.. In terms of biological role, part of the Sec protein translocase complex. Interacts with the SecYEG preprotein conducting channel. Has a central role in coupling the hydrolysis of ATP to the transfer of proteins into and across the cell membrane, serving both as a receptor for the preprotein-SecB complex and as an ATP-driven molecular motor driving the stepwise translocation of polypeptide chains across the membrane. This is Protein translocase subunit SecA from Allorhizobium ampelinum (strain ATCC BAA-846 / DSM 112012 / S4) (Agrobacterium vitis (strain S4)).